The chain runs to 556 residues: MDFGFFPGDLRQRGSFTDLGFNGFPLTSSVSNGFHFSGDRTTNPFLNLRKLDTTSLMADGVDMGLCQNLSKMSISDERSNFFNHSSFSGYGCYQGRESSFHGEASSSMRGFVGYGDVHRFEQDLRVRASFHGESAMSSYVGDGSDYHRLRFLALQEASNPNPRCFTENMSLLNRDYMLELEHFNQQIRRDFSLVPQKSPLAFHEERILPPFSAMGGSRELDGSAKCMKNKEDSLDLASMVDSYGSVYLMAKDQLGCRLLQKFVDEGNFVDVMIIFKEVINNVIELGTDPFGNYLIQKLIEVCNEEQRTQILIRLTSKPGLLVKISINNYGTRVVQKLIETVTTKEQISLVKSALVPGFLSLFRELNGNHVILNCLKFFSPNDNKFILEAATKFCIEIATTRHGCCVLQRCVSYSVGEQHEKLVDEISRNSLLLAQDPFGNYLVQYIIEKKVGGVNVLFELRGNYVKLATQKFGSHVVEKCLRYYPESRSQIVNELVSVLNFGYLLQDPYANYVIQCALSKTKGFVRASLVEKVRRYENLKMTPYCKRIFSKNLWKK.

Residues 215–556 form the PUM-HD domain; the sequence is GGSRELDGSA…RIFSKNLWKK (342 aa). 8 Pumilio repeats span residues 238–276, 277–313, 316–351, 353–388, 389–424, 425–459, 460–495, and 496–531; these read SMVD…IIFK, EVIN…ILIR, SKPG…SLVK, ALVP…FILE, AATK…KLVD, EISR…VLFE, LRGN…VNEL, and VSVL…SLVE.

It is found in the cytoplasm. Functionally, sequence-specific RNA-binding protein that regulates translation and mRNA stability by binding the 3'-UTR of target mRNAs. The polypeptide is Pumilio homolog 11 (APUM11) (Arabidopsis thaliana (Mouse-ear cress)).